Reading from the N-terminus, the 1045-residue chain is Mitotic deacetylase-associated SANT domain protein (1045 aa).

N-acetylmethionine is present on Met-1. Disordered stretches follow at residues 1-68 (MNLQ…PPPS) and 99-159 (NSVM…PTYY). Over residues 132–146 (STWNCHSLSLYSATK) the composition is skewed to polar residues. Residue Lys-166 forms a Glycyl lysine isopeptide (Lys-Gly) (interchain with G-Cter in SUMO2) linkage. Arg-193 bears the Asymmetric dimethylarginine mark. Disordered regions lie at residues 228–264 (QVFRQGPPPPNPVAAFPPQKQQQQQQPQQQQQQQQAA), 276–305 (SMPQQPSQQPQDFGLQPAGPLGQSHLAHHS), 330–349 (APQPALPQVQIPFPRRSRRL), 378–397 (HHWPLQQPPPGSLGQPHPEA), and 410–441 (LPDGERLAPNGREREAPAMGSEEGMRAVSTGD). The segment covering 240–264 (VAAFPPQKQQQQQQPQQQQQQQQAA) has biased composition (low complexity). The span at 412 to 425 (DGERLAPNGREREA) shows a compositional bias: basic and acidic residues. An Omega-N-methylarginine modification is found at Arg-447. Ser-461 is modified (phosphoserine). Residues 543 to 563 (QAGGLDEDGKGPEQNPAEHKP) form a disordered region. Over residues 549–563 (EDGKGPEQNPAEHKP) the composition is skewed to basic and acidic residues. Residue Lys-590 forms a Glycyl lysine isopeptide (Lys-Gly) (interchain with G-Cter in SUMO1); alternate linkage. Residue Lys-590 forms a Glycyl lysine isopeptide (Lys-Gly) (interchain with G-Cter in SUMO2); alternate linkage. Position 655 is a phosphothreonine (Thr-655). Ser-661 is subject to Phosphoserine. The residue at position 704 (Thr-704) is a Phosphothreonine. Ser-709 is modified (phosphoserine). Residue Thr-715 is modified to Phosphothreonine. In terms of domain architecture, ELM2 spans 721–813 (PRINVGSRFQ…ETLNKLLLKK (93 aa)). The SANT domain occupies 828 to 879 (TGSDQWKMAERKLFNKGIAIYKKDFFLVQKLIQTKTVAQCVEFYYTYKKQVK). Residues 887–1045 (TFGDVDTSDE…NTFPCKKCGR (159 aa)) form a disordered region. Basic and acidic residues-rich tracts occupy residues 894–909 (SDEKSAQEEVEVDIKT) and 919–942 (PRRESPSEERLEPKREVKEPRKEG). Residue Ser-923 is modified to Phosphoserine. Residues 943–957 (EEEVPEIQEKEEQEE) show a composition bias toward acidic residues. Over residues 970 to 980 (ATQTLQANESA) the composition is skewed to polar residues.

Interacts with DNTTIP1. Identified in a histone deacetylase complex that contains DNTTIP1, HDAC1 and MIDEAS; this complex assembles into a tetramer that contains four copies of each protein chain.

The protein resides in the nucleus. This Homo sapiens (Human) protein is Mitotic deacetylase-associated SANT domain protein.